The chain runs to 340 residues: MAANNKKYFLESFSPLGYVKNNFQGNLRSVNWNLVDDEKDLEVWNRIVQNFWLPEKIPVSNDIPSWKKLSKDWQDLITKTFTGLTLLDTIQATIGDICQIDHALTDHEQVIYANFAFMVGVHARSYGTIFSTLCTSEQINAAHEWVVNTESLQKRAKALIPYYTGNDPLKSKVAAALMPGFLLYGGFYLPFYLSSRKQLPNTSDIIRLILRDKVIHNYYSGYKYQRKLEKLPLAKQKEMKAFVFELMYRLIELEKDYLKELYEGFGIVDDAIKFSVYNAGKFLQNLGYDSPFTAAETRIKPEIFAQLSARADENHDFFSGNGSSYVMGVSEETNDDDWNF.

Positions 88 and 122 each coordinate Fe cation. Tyrosine 126 is a catalytic residue. Histidine 216 contributes to the Fe cation binding site.

It belongs to the ribonucleoside diphosphate reductase small chain family. Tetramer of two alpha and two beta subunits. The cofactor is Fe cation.

It carries out the reaction a 2'-deoxyribonucleoside 5'-diphosphate + [thioredoxin]-disulfide + H2O = a ribonucleoside 5'-diphosphate + [thioredoxin]-dithiol. In terms of biological role, provides the precursors necessary for DNA synthesis. Catalyzes the biosynthesis of deoxyribonucleotides from the corresponding ribonucleotides. The sequence is that of Ribonucleoside-diphosphate reductase subunit beta (nrdF) from Mycoplasma genitalium (strain ATCC 33530 / DSM 19775 / NCTC 10195 / G37) (Mycoplasmoides genitalium).